A 124-amino-acid chain; its full sequence is Large ribosomal subunit protein bL19 (124 aa).

It belongs to the bacterial ribosomal protein bL19 family.

In terms of biological role, this protein is located at the 30S-50S ribosomal subunit interface and may play a role in the structure and function of the aminoacyl-tRNA binding site. The chain is Large ribosomal subunit protein bL19 from Orientia tsutsugamushi (strain Ikeda) (Rickettsia tsutsugamushi).